The chain runs to 506 residues: Anaerobic nitric oxide reductase transcription regulator NorR (506 aa).

Aspartate 57 bears the 4-aspartylphosphate mark. The Sigma-54 factor interaction domain maps to 187–416; sequence MIGLSPAMTQ…LEHAIHRAVV (230 aa). ATP is bound by residues 215–222 and 278–287; these read GETGTGKE and ADNGTLFLDE. Positions 481 to 500 form a DNA-binding region, H-T-H motif; that stretch reads WAASARALETDVANLHRLAK.

The protein operates within nitrogen metabolism; nitric oxide reduction. Functionally, required for the expression of anaerobic nitric oxide (NO) reductase, acts as a transcriptional activator for at least the norVW operon. Activation also requires sigma-54. This is Anaerobic nitric oxide reductase transcription regulator NorR from Salmonella paratyphi A (strain ATCC 9150 / SARB42).